The chain runs to 480 residues: ATP synthase subunit beta (480 aa).

158 to 165 provides a ligand contact to ATP; that stretch reads GGAGVGKT.

The protein belongs to the ATPase alpha/beta chains family. In terms of assembly, F-type ATPases have 2 components, CF(1) - the catalytic core - and CF(0) - the membrane proton channel. CF(1) has five subunits: alpha(3), beta(3), gamma(1), delta(1), epsilon(1). CF(0) has three main subunits: a(1), b(2) and c(9-12). The alpha and beta chains form an alternating ring which encloses part of the gamma chain. CF(1) is attached to CF(0) by a central stalk formed by the gamma and epsilon chains, while a peripheral stalk is formed by the delta and b chains.

It is found in the cell inner membrane. It carries out the reaction ATP + H2O + 4 H(+)(in) = ADP + phosphate + 5 H(+)(out). Its function is as follows. Produces ATP from ADP in the presence of a proton gradient across the membrane. The catalytic sites are hosted primarily by the beta subunits. This chain is ATP synthase subunit beta, found in Acidobacterium capsulatum (strain ATCC 51196 / DSM 11244 / BCRC 80197 / JCM 7670 / NBRC 15755 / NCIMB 13165 / 161).